We begin with the raw amino-acid sequence, 529 residues long: Peptide chain release factor 3 (529 aa).

In terms of domain architecture, tr-type G spans 7-275; that stretch reads EQRRTFGIIS…AVVELAPSPR (269 aa). GTP-binding positions include 16-23, 84-88, and 138-141; these read SHPDAGKT, DTPGH, and NKLD.

The protein belongs to the TRAFAC class translation factor GTPase superfamily. Classic translation factor GTPase family. PrfC subfamily.

It localises to the cytoplasm. Its function is as follows. Increases the formation of ribosomal termination complexes and stimulates activities of RF-1 and RF-2. It binds guanine nucleotides and has strong preference for UGA stop codons. It may interact directly with the ribosome. The stimulation of RF-1 and RF-2 is significantly reduced by GTP and GDP, but not by GMP. The sequence is that of Peptide chain release factor 3 from Syntrophus aciditrophicus (strain SB).